The sequence spans 93 residues: UPF0223 protein str0998 (93 aa).

This sequence belongs to the UPF0223 family.

The protein is UPF0223 protein str0998 of Streptococcus thermophilus (strain CNRZ 1066).